Consider the following 275-residue polypeptide: Chemotaxis protein methyltransferase 1 (275 aa).

The 275-residue stretch at 1–275 (MTAITISDQE…CNPGIIYKLK (275 aa)) folds into the CheR-type methyltransferase domain. Residues N76, T78, R82, E117, D145, 201-202 (NL), and 218-219 (RN) each bind S-adenosyl-L-methionine.

The enzyme catalyses L-glutamyl-[protein] + S-adenosyl-L-methionine = [protein]-L-glutamate 5-O-methyl ester + S-adenosyl-L-homocysteine. Methylation of the membrane-bound methyl-accepting chemotaxis proteins (MCP) to form gamma-glutamyl methyl ester residues in MCP. The protein is Chemotaxis protein methyltransferase 1 (cheR1) of Vibrio cholerae serotype O1 (strain ATCC 39315 / El Tor Inaba N16961).